A 579-amino-acid chain; its full sequence is 2-isopropylmalate synthase (579 aa).

The Pyruvate carboxyltransferase domain occupies 40-314 (PRWCAVDLRD…DPMIDFSDID (275 aa)). 4 residues coordinate Mg(2+): aspartate 49, histidine 253, histidine 255, and asparagine 289. The segment at 456–579 (SDEEQAQWGR…VNRAVRDAQA (124 aa)) is regulatory domain.

The protein belongs to the alpha-IPM synthase/homocitrate synthase family. LeuA type 2 subfamily. Homodimer. Mg(2+) is required as a cofactor.

Its subcellular location is the cytoplasm. It carries out the reaction 3-methyl-2-oxobutanoate + acetyl-CoA + H2O = (2S)-2-isopropylmalate + CoA + H(+). Its pathway is amino-acid biosynthesis; L-leucine biosynthesis; L-leucine from 3-methyl-2-oxobutanoate: step 1/4. Functionally, catalyzes the condensation of the acetyl group of acetyl-CoA with 3-methyl-2-oxobutanoate (2-ketoisovalerate) to form 3-carboxy-3-hydroxy-4-methylpentanoate (2-isopropylmalate). The protein is 2-isopropylmalate synthase of Paenarthrobacter aurescens (strain TC1).